A 347-amino-acid polypeptide reads, in one-letter code: Isopentenyl-diphosphate delta-isomerase (347 aa).

Residue 9–10 (RK) coordinates substrate. FMN-binding positions include S67, 68-70 (SMT), S98, and N127. A substrate-binding site is contributed by 98–100 (SQR). Q162 provides a ligand contact to substrate. Residue E163 coordinates Mg(2+). Residues K194, T224, 274 to 276 (GIK), and 295 to 296 (AA) each bind FMN.

The protein belongs to the IPP isomerase type 2 family. Homooctamer. Dimer of tetramers. FMN is required as a cofactor. NADPH serves as cofactor. Requires Mg(2+) as cofactor.

It localises to the cytoplasm. It carries out the reaction isopentenyl diphosphate = dimethylallyl diphosphate. Involved in the biosynthesis of isoprenoids. Catalyzes the 1,3-allylic rearrangement of the homoallylic substrate isopentenyl (IPP) to its allylic isomer, dimethylallyl diphosphate (DMAPP). This Pseudescherichia vulneris (Escherichia vulneris) protein is Isopentenyl-diphosphate delta-isomerase.